The following is a 390-amino-acid chain: uncharacterized protein (390 aa).

11 consecutive transmembrane segments (helical) span residues 7 to 27 (IYIL…ISGI), 35 to 55 (LGIT…VYAL), 77 to 97 (LGLF…GWFI), 101 to 121 (IIMA…AAKI), 128 to 148 (GSAI…GVPL), 161 to 181 (VFGA…FTLP), 203 to 223 (VAMG…AYTY), 238 to 258 (LLSG…KFGG), 281 to 301 (LILL…LILW), 335 to 355 (MQFA…NVSL), and 357 to 377 (SITW…LLIF).

It belongs to the major facilitator superfamily.

Its subcellular location is the cell membrane. This is an uncharacterized protein from Bacillus subtilis (strain 168).